Here is a 247-residue protein sequence, read N- to C-terminus: MADTTPNGPQGAGAVQFMMTNKLDTAMWLSRLFTVYCSALFVLPLLGLHEAASFYQRALLANALTSALRLHQRLPHFQLSRAFLAQALLEDSCHYLLYSLIFVNSYPVTMSIFPVLLFSLLHAATYTKKVLDAKGSNSLPLLRSVLDKLSTNQQNILKFIACNEIFLMPATVFMLFSGQGSLLQPFIYYRFLTLRYSSRRNPYCRNLFNELRIVVEHIIMKPSCPLFVRRLCLQSIAFISRLAPTVA.

N-acetylalanine is present on alanine 2. The Lumenal portion of the chain corresponds to 2-31 (ADTTPNGPQGAGAVQFMMTNKLDTAMWLSR). The chain crosses the membrane as a helical span at residues 32 to 52 (LFTVYCSALFVLPLLGLHEAA). At 53-100 (SFYQRALLANALTSALRLHQRLPHFQLSRAFLAQALLEDSCHYLLYSL) the chain is on the cytoplasmic side. A helical transmembrane segment spans residues 101 to 121 (IFVNSYPVTMSIFPVLLFSLL). Residues 122–155 (HAATYTKKVLDAKGSNSLPLLRSVLDKLSTNQQN) are Lumenal-facing. The helical transmembrane segment at 156 to 176 (ILKFIACNEIFLMPATVFMLF) threads the bilayer. Residues 177–247 (SGQGSLLQPF…FISRLAPTVA (71 aa)) lie on the Cytoplasmic side of the membrane.

The protein belongs to the PER33/POM33 family. Interacts with EIF2AK3. Interacts with ARL6IP1, isoform RTN1-A of RTN1, isoform RTN2-B of RTN2, isoform 3 of RTN3 and isoform 3 of RTN4. Interacts with RNF5. Interacts with RNF26. Interacts with PKD2. Highly expressed in the liver and significantly in brain, lungs and kidneys.

It is found in the endoplasmic reticulum membrane. The protein resides in the melanosome. It localises to the nucleus envelope. Its function is as follows. Acts as a regulator of the tubular endoplasmic reticulum (ER) network by modulating intracellular calcium homeostasis. Mechanistically, stimulates PKD2 calcium-dependent activity. Suppresses the RTN3/4-induced formation of the ER tubules. Positively regulates PERK-mediated and IRE1-mediated unfolded protein response signaling. Plays an essential role in VEGF-mediated release of Ca(2+) from ER stores during angiogenesis. Also plays a role in the modulation of innate immune signaling through the cGAS-STING pathway by interacting with RNF26. Participates in lipid metabolism by acting as a downstream effector of the pyruvate kinase/PKM. Forms a complex with RNF5 to facilitate polyubiquitination and subsequent degradation of SCAP on the ER membrane. This chain is Transmembrane protein 33 (Tmem33), found in Rattus norvegicus (Rat).